Consider the following 235-residue polypeptide: Phosphoribosylaminoimidazole-succinocarboxamide synthase (235 aa).

Belongs to the SAICAR synthetase family.

It catalyses the reaction 5-amino-1-(5-phospho-D-ribosyl)imidazole-4-carboxylate + L-aspartate + ATP = (2S)-2-[5-amino-1-(5-phospho-beta-D-ribosyl)imidazole-4-carboxamido]succinate + ADP + phosphate + 2 H(+). Its pathway is purine metabolism; IMP biosynthesis via de novo pathway; 5-amino-1-(5-phospho-D-ribosyl)imidazole-4-carboxamide from 5-amino-1-(5-phospho-D-ribosyl)imidazole-4-carboxylate: step 1/2. This is Phosphoribosylaminoimidazole-succinocarboxamide synthase from Streptococcus pneumoniae (strain 70585).